Consider the following 621-residue polypeptide: MSPVFPMLTVLTMFYYMCLRRRARTATRGEIMNSHRTVESNSRTSPLNAEVVQYAKEVVDFSSHYGSENSMSYTMWNLAGVPNVFPSSGDFTQTAVFRTYGTWWDQCPSAPVPFKRTPANFQSQDYVELAFEQQVYPTAVHVLETYHPGAVIRILACSANPYSPGPPAEVRWETLWSEKPTKVNASQARQFKPCIKQINFPTNLIRLEINSSLLDYYTELDAVVLHGMKDKPMLSLKTSLIDMNDLDEDDYEEKDDCEIDNLNKKFSSTALREGPSNGYFDKLPYELIQLILNHLTLPDLCRLAQTCKLLNQHCCDPLQYIHLNLQPYWAKLNDTSLEFLQARCTLVQWLNLSWTGNRGFISVAGFSRFLKVCGSELVRLELSCSHFLNETCLEIISEMCPNLQDLNLSSCDKLPPQAFSHIAKLCGLKRLVLYRTKVEQTALLSILNFCSDLQHLSLGSCVMIEDYDVTASMIGAKCKKLRTLDLWRCKNITESGIAELASGCPLLEELDLGWCPTLQSSTGCFARLARQLPNLQKLFLTANRSVCDTDIEELASNCTRLRQLDILGTRMVSPASLRKLLESCKDLSLLDVSFCSQIDNRAVLELSASFPKVFIKKSFTQ.

Arginine 28 bears the Asymmetric dimethylarginine mark. Residues 277–332 enclose the F-box domain; sequence NGYFDKLPYELIQLILNHLTLPDLCRLAQTCKLLNQHCCDPLQYIHLNLQPYWAKL. LRR repeat units follow at residues 376–397, 402–421, 427–448, 452–474, 480–501, 504–524, 532–558, 559–583, and 584–609; these read ELVR…EIIS, NLQD…AFSH, GLKR…SILN, DLQH…ASMI, KLRT…AELA, CPLL…STGC, LPNL…ASNC, TRLR…LLES, and CKDL…LSAS.

Part of a SCF (SKP1-CUL1-F-box) protein ligase complex. Interacts with FAF2 and VCP. Interacts with PPTC7; this interaction promotes destruction of BNIP3 and NIX and mitophagy suppression.

The protein localises to the cytoplasm. The protein resides in the nucleus. Its subcellular location is the mitochondrion outer membrane. Functionally, substrate-recognition component of the mitochondria-localized SCF-FBXL4 ubiquitin E3 ligase complex that plays a role in the restriction of mitophagy by controlling the degradation of BNIP3 and NIX mitophagy receptors. Also rescues mitochondrial injury through reverting hyperactivation of DRP1-mediated mitochondrial fission. This is F-box/LRR-repeat protein 4 (FBXL4) from Bos taurus (Bovine).